Reading from the N-terminus, the 159-residue chain is NAD(P)H-quinone oxidoreductase subunit I, chloroplastic (159 aa).

2 consecutive 4Fe-4S ferredoxin-type domains span residues 55–84 and 95–124; these read GRIH…VDWN and KNYS…MTEE. Residues C64, C67, C70, C74, C104, C107, C110, and C114 each coordinate [4Fe-4S] cluster.

This sequence belongs to the complex I 23 kDa subunit family. As to quaternary structure, NDH is composed of at least 16 different subunits, 5 of which are encoded in the nucleus. The cofactor is [4Fe-4S] cluster.

The protein localises to the plastid. Its subcellular location is the chloroplast thylakoid membrane. It catalyses the reaction a plastoquinone + NADH + (n+1) H(+)(in) = a plastoquinol + NAD(+) + n H(+)(out). The catalysed reaction is a plastoquinone + NADPH + (n+1) H(+)(in) = a plastoquinol + NADP(+) + n H(+)(out). In terms of biological role, NDH shuttles electrons from NAD(P)H:plastoquinone, via FMN and iron-sulfur (Fe-S) centers, to quinones in the photosynthetic chain and possibly in a chloroplast respiratory chain. The immediate electron acceptor for the enzyme in this species is believed to be plastoquinone. Couples the redox reaction to proton translocation, and thus conserves the redox energy in a proton gradient. In Chara vulgaris (Common stonewort), this protein is NAD(P)H-quinone oxidoreductase subunit I, chloroplastic.